Consider the following 133-residue polypeptide: Small ribosomal subunit protein mS23 (133 aa).

It belongs to the mitochondrion-specific ribosomal protein mS23 family. As to quaternary structure, component of the mitochondrial ribosome small subunit (28S) which comprises a 12S rRNA and about 30 distinct proteins.

It localises to the mitochondrion. This Caenorhabditis elegans protein is Small ribosomal subunit protein mS23 (mrps-23).